Reading from the N-terminus, the 92-residue chain is Probable Fe(2+)-trafficking protein (92 aa).

The protein belongs to the Fe(2+)-trafficking protein family.

Could be a mediator in iron transactions between iron acquisition and iron-requiring processes, such as synthesis and/or repair of Fe-S clusters in biosynthetic enzymes. This Shewanella loihica (strain ATCC BAA-1088 / PV-4) protein is Probable Fe(2+)-trafficking protein.